Consider the following 500-residue polypeptide: Cytochrome P450 2D20 (500 aa).

Cys-446 provides a ligand contact to heme.

It belongs to the cytochrome P450 family. Heme is required as a cofactor.

Its subcellular location is the endoplasmic reticulum membrane. It is found in the microsome membrane. The sequence is that of Cytochrome P450 2D20 (CYP2D20) from Mesocricetus auratus (Golden hamster).